Here is a 110-residue protein sequence, read N- to C-terminus: V-type proton ATPase subunit G1 (110 aa).

Residue Met1 is modified to N-acetylmethionine. The tract at residues 60–80 (KLEETSGDSGANVKRLEQETD) is disordered.

The protein belongs to the V-ATPase G subunit family. V-ATPase is a heteromultimeric enzyme composed of a peripheral catalytic V1 complex (components A to H) attached to an integral membrane V0 proton pore complex (components: a, c, c'', d and e).

It is found in the cell membrane. The protein resides in the vacuole membrane. Catalytic subunit of the peripheral V1 complex of vacuolar ATPase (V-ATPase). V-ATPase is responsible for acidifying a variety of intracellular compartments in eukaryotic cells. The chain is V-type proton ATPase subunit G1 (VHA-G1) from Arabidopsis thaliana (Mouse-ear cress).